We begin with the raw amino-acid sequence, 300 residues long: ETS homologous factor (300 aa).

The PNT domain occupies 29-115 (PTCNVSSGFF…SNLQHLKWNG (87 aa)). The interval 181-203 (VAESPDMKKEQDHPVKSHTKKHN) is disordered. Positions 185–195 (PDMKKEQDHPV) are enriched in basic and acidic residues. A DNA-binding region (ETS) is located at residues 207-289 (THLWEFIRDI…DGRRLVYKFG (83 aa)).

It belongs to the ETS family. As to expression, highly expressed in kidney and lung, weakly in skeletal muscle, heart, and liver, and not detected in brain, spleen or testis.

It is found in the nucleus. Its function is as follows. Transcriptional activator that may play a role in regulating epithelial cell differentiation and proliferation. May act as a repressor for a specific subset of ETS/AP-1-responsive genes, and as a modulator of the nuclear response to mitogen-activated protein kinase signaling cascades. Binds to DNA sequences containing the consensus nucleotide core sequence GGAA. Involved in regulation of TNFRSF10B/DR5 expression through Ets-binding sequences on the TNFRSF10B/DR5 promoter. This chain is ETS homologous factor, found in Mus musculus (Mouse).